The chain runs to 291 residues: Protein/nucleic acid deglycase HchA (291 aa).

The segment covering 1–18 has biased composition (basic and acidic residues); that stretch reads MSNERDTSRTPTPDHAEH. A disordered region spans residues 1–24; that stretch reads MSNERDTSRTPTPDHAEHNAFFPS. The active-site Nucleophile is the cysteine 188.

The protein belongs to the peptidase C56 family. HchA subfamily.

Its subcellular location is the cytoplasm. The enzyme catalyses N(omega)-(1-hydroxy-2-oxopropyl)-L-arginyl-[protein] + H2O = lactate + L-arginyl-[protein] + H(+). It catalyses the reaction N(6)-(1-hydroxy-2-oxopropyl)-L-lysyl-[protein] + H2O = lactate + L-lysyl-[protein] + H(+). The catalysed reaction is S-(1-hydroxy-2-oxopropyl)-L-cysteinyl-[protein] + H2O = lactate + L-cysteinyl-[protein] + H(+). It carries out the reaction N(omega)-(1-hydroxy-2-oxoethyl)-L-arginyl-[protein] + H2O = L-arginyl-[protein] + glycolate + H(+). The enzyme catalyses N(6)-(1-hydroxy-2-oxoethyl)-L-lysyl-[protein] + H2O = glycolate + L-lysyl-[protein] + H(+). It catalyses the reaction S-(1-hydroxy-2-oxoethyl)-L-cysteinyl-[protein] + H2O = glycolate + L-cysteinyl-[protein] + H(+). The catalysed reaction is N(2)-(1-hydroxy-2-oxopropyl)-dGTP + H2O = lactate + dGTP + H(+). It carries out the reaction N(2)-(1-hydroxy-2-oxopropyl)-GTP + H2O = lactate + GTP + H(+). The enzyme catalyses N(2)-(1-hydroxy-2-oxopropyl)-GDP + H2O = lactate + GDP + H(+). It catalyses the reaction N(2)-(1-hydroxy-2-oxopropyl)-GMP + H2O = lactate + GMP + H(+). The catalysed reaction is N(2)-(1-hydroxy-2-oxoethyl)-dGTP + H2O = dGTP + glycolate + H(+). It carries out the reaction N(2)-(1-hydroxy-2-oxoethyl)-GTP + H2O = glycolate + GTP + H(+). The enzyme catalyses N(2)-(1-hydroxy-2-oxoethyl)-GDP + H2O = glycolate + GDP + H(+). It catalyses the reaction N(2)-(1-hydroxy-2-oxoethyl)-GMP + H2O = glycolate + GMP + H(+). The catalysed reaction is an N(2)-(1-hydroxy-2-oxopropyl)-guanosine in RNA + H2O = a guanosine in RNA + lactate + H(+). It carries out the reaction an N(2)-(1-hydroxy-2-oxopropyl)-2'-deoxyguanosine in DNA + H2O = a 2'-deoxyguanosine in DNA + lactate + H(+). The enzyme catalyses an N(2)-(1-hydroxy-2-oxoethyl)-guanosine in RNA + H2O = a guanosine in RNA + glycolate + H(+). It catalyses the reaction an N(2)-(1-hydroxy-2-oxoethyl)-2'-deoxyguanosine in DNA + H2O = a 2'-deoxyguanosine in DNA + glycolate + H(+). Protein and nucleotide deglycase that catalyzes the deglycation of the Maillard adducts formed between amino groups of proteins or nucleotides and reactive carbonyl groups of glyoxals. Thus, functions as a protein deglycase that repairs methylglyoxal- and glyoxal-glycated proteins, and releases repaired proteins and lactate or glycolate, respectively. Deglycates cysteine, arginine and lysine residues in proteins, and thus reactivates these proteins by reversing glycation by glyoxals. Acts on early glycation intermediates (hemithioacetals and aminocarbinols), preventing the formation of Schiff bases and advanced glycation endproducts (AGE). Also functions as a nucleotide deglycase able to repair glycated guanine in the free nucleotide pool (GTP, GDP, GMP, dGTP) and in DNA and RNA. Is thus involved in a major nucleotide repair system named guanine glycation repair (GG repair), dedicated to reversing methylglyoxal and glyoxal damage via nucleotide sanitization and direct nucleic acid repair. Plays an important role in protecting cells from carbonyl stress. The polypeptide is Protein/nucleic acid deglycase HchA (Pseudomonas aeruginosa (strain UCBPP-PA14)).